The following is a 267-amino-acid chain: Putative N-acetylmuramoyl-L-alanine amidase RC0497 (267 aa).

The tract at residues 1–25 is disordered; sequence MSKSKAIENNGISNTNSPNGKYMAP. Positions 10–19 are enriched in polar residues; the sequence is NGISNTNSPN. The region spanning 33-141 is the N-acetylmuramoyl-L-alanine amidase domain; it reads TCVVITYSVS…NLDLKHDLVG (109 aa).

Belongs to the N-acetylmuramoyl-L-alanine amidase 2 family.

The protein localises to the secreted. It carries out the reaction Hydrolyzes the link between N-acetylmuramoyl residues and L-amino acid residues in certain cell-wall glycopeptides.. This Rickettsia conorii (strain ATCC VR-613 / Malish 7) protein is Putative N-acetylmuramoyl-L-alanine amidase RC0497.